Reading from the N-terminus, the 269-residue chain is Carbohydrate metabolism regulator TYE7 (269 aa).

The disordered stretch occupies residues 146–178 (QPKIKQEPGTKAATKPKRRAPRKKLTESQKKAH). The span at 159 to 168 (TKPKRRAPRK) shows a compositional bias: basic residues. Over residues 169 to 178 (KLTESQKKAH) the composition is skewed to basic and acidic residues. The region spanning 173 to 244 (SQKKAHNKIE…EKATEYILHL (72 aa)) is the bHLH domain.

In terms of assembly, efficient DNA binding requires dimerization with another bHLH protein.

Its subcellular location is the nucleus. Key transcriptional regulator of carbohydrate metabolism. Binds the promoter sequences of the glycolytic genes at the CANNTG motif and activates their expression during growth on either fermentable or non-fermentable carbon sources as well as under hypoxic growth conditions. Complete glycolytic activation by GAL4 and TYE7 is required for full virulence. Involved in biofilm formation and negatively regulates hyphal formation under hypoxia. Also controls the expression of the copper transport protein CTR1. The chain is Carbohydrate metabolism regulator TYE7 (TYE7) from Candida albicans (strain SC5314 / ATCC MYA-2876) (Yeast).